A 299-amino-acid polypeptide reads, in one-letter code: MEEFDSEDFSTSEEDEDYVPSGGEYSEDDVNELVKEDEVDGEEQTQKTQGKKRKAQSIPARKRRQGGLSLEEEEEEDANSESEGSSSEEEDDAAEQEKGIGSEDARKKKEDELWASFLNDVGPKSKVPPSTQVKKGEETEETSSSKLLVKAEELEKPKETEKVKITKVFDFAGEEVRVTKEVDATSKEAKSFFKQNEKEKPQANVPSALPSLPAGSGLKRSSGMSSLLGKIGAKKQKMSTLEKSKLDWESFKEEEGIGEELAIHNRGKEGYIERKAFLDRVDHRQFEIERDLRLSKMKP.

2 stretches are compositionally biased toward acidic residues: residues 1–18 (MEEF…DEDY) and 25–43 (YSED…DGEE). Disordered stretches follow at residues 1 to 156 (MEEF…ELEK) and 192 to 224 (FFKQ…SSGM). Residues 49–65 (QGKKRKAQSIPARKRRQ) show a composition bias toward basic residues. The segment covering 70–94 (LEEEEEEDANSESEGSSSEEEDDAA) has biased composition (acidic residues). Residues Ser82, Ser85, and Ser86 each carry the phosphoserine modification. Residues 95-112 (EQEKGIGSEDARKKKEDE) show a composition bias toward basic and acidic residues. Ser116 bears the Phosphoserine mark. A Glycyl lysine isopeptide (Lys-Gly) (interchain with G-Cter in SUMO2) cross-link involves residue Lys150. The tract at residues 178–217 (VTKEVDATSKEAKSFFKQNEKEKPQANVPSALPSLPAGSG) is hydrophilic. Over residues 192 to 201 (FFKQNEKEKP) the composition is skewed to basic and acidic residues. Phosphoserine is present on Ser216. Residues 218 to 299 (LKRSSGMSSL…RDLRLSKMKP (82 aa)) enclose the BCNT-C domain. The residue at position 219 (Lys219) is an N6-methyllysine. The residue at position 250 (Ser250) is a Phosphoserine.

Phosphorylated by CK2 (casein kinase II) in vitro. As to expression, ubiquitous.

Its subcellular location is the chromosome. It localises to the centromere. The protein localises to the kinetochore. Functionally, may play a role during embryogenesis. The chain is Craniofacial development protein 1 (CFDP1) from Homo sapiens (Human).